The sequence spans 207 residues: Holliday junction branch migration complex subunit RuvA (207 aa).

The interval 1–68 is domain I; the sequence is MIGYLQGSLA…EDQWLLFGFL (68 aa). The interval 69 to 147 is domain II; sequence QMAERDLFRQ…EWREEAGLLP (79 aa). The segment at 148-158 is flexible linker; that stretch reads SATAAPIAAVQ. The segment at 158–207 is domain III; that stretch reads QEDVEMTLLALGYNNREILQALTAIAQENLVQSGQPAEDWIREAIAWLSR.

Belongs to the RuvA family. In terms of assembly, homotetramer. Forms an RuvA(8)-RuvB(12)-Holliday junction (HJ) complex. HJ DNA is sandwiched between 2 RuvA tetramers; dsDNA enters through RuvA and exits via RuvB. An RuvB hexamer assembles on each DNA strand where it exits the tetramer. Each RuvB hexamer is contacted by two RuvA subunits (via domain III) on 2 adjacent RuvB subunits; this complex drives branch migration. In the full resolvosome a probable DNA-RuvA(4)-RuvB(12)-RuvC(2) complex forms which resolves the HJ.

Its subcellular location is the cytoplasm. In terms of biological role, the RuvA-RuvB-RuvC complex processes Holliday junction (HJ) DNA during genetic recombination and DNA repair, while the RuvA-RuvB complex plays an important role in the rescue of blocked DNA replication forks via replication fork reversal (RFR). RuvA specifically binds to HJ cruciform DNA, conferring on it an open structure. The RuvB hexamer acts as an ATP-dependent pump, pulling dsDNA into and through the RuvAB complex. HJ branch migration allows RuvC to scan DNA until it finds its consensus sequence, where it cleaves and resolves the cruciform DNA. This Synechococcus elongatus (strain ATCC 33912 / PCC 7942 / FACHB-805) (Anacystis nidulans R2) protein is Holliday junction branch migration complex subunit RuvA.